The following is an 806-amino-acid chain: Cell cycle progression protein 1 (806 aa).

Over 1–216 the chain is Cytoplasmic; that stretch reads MSENSSDSDS…KRQFSSGLNK (216 aa). An interaction with MCF2L and SRC region spans residues 1 to 307; the sequence is MSENSSDSDS…QKTNLATENQ (307 aa). Disordered regions lie at residues 80 to 105 and 152 to 207; these read SSTIEAEEEKIPEDNIYIGTASDDSD and VFSS…KESK. Residues 175–184 show a composition bias toward basic residues; that stretch reads FRRRRARKKT. Ser-186 is subject to Phosphoserine. Over residues 190 to 207 the composition is skewed to basic and acidic residues; sequence SEDRLVAEQETEPSKESK. Residues 217-237 traverse the membrane as a helical; Signal-anchor for type II membrane protein segment; it reads CVILALVIAVSMGFGHFYGTI. Residues 238-806 lie on the Lumenal side of the membrane; it reads QIQKRQQLVR…LGQLPFDPQY (569 aa). Residues 305 to 449 adopt a coiled-coil conformation; sequence ENQYLRVSLE…EQQRSDLWER (145 aa). Over residues 457–467 the composition is skewed to basic and acidic residues; the sequence is QSGKQETDGKK. The interval 457-478 is disordered; sequence QSGKQETDGKKKVGRGNHRAKN. Over residues 468–478 the composition is skewed to basic residues; sequence KVGRGNHRAKN. The stretch at 503 to 529 forms a coiled coil; the sequence is VRHHKEKIKQAKEAVKENLKKFSDSVK. The segment at 758–778 is disordered; it reads SRHRKQEQKHLQPQPYKREGK.

The protein belongs to the CCPG1 family. Interacts with MCF2L. May interact with MCF2, ARHGEF1, BCR, VAV1 and FGD1, but not with TIAM1. Interacts with GTP-bound CDC42 and SRC.

It localises to the cytoplasmic granule membrane. Functionally, acts as an assembly platform for Rho protein signaling complexes. Limits guanine nucleotide exchange activity of MCF2L toward RHOA, which results in an inhibition of both its transcriptional activation ability and its transforming activity. Does not inhibit activity of MCF2L toward CDC42, or activity of MCF2 toward either RHOA or CDC42. May be involved in cell cycle regulation. The chain is Cell cycle progression protein 1 (CCPG1) from Pongo abelii (Sumatran orangutan).